The chain runs to 78 residues: Acyl carrier protein (78 aa).

Positions Ser2–Ala77 constitute a Carrier domain. O-(pantetheine 4'-phosphoryl)serine is present on Ser37.

The protein belongs to the acyl carrier protein (ACP) family. Post-translationally, 4'-phosphopantetheine is transferred from CoA to a specific serine of apo-ACP by AcpS. This modification is essential for activity because fatty acids are bound in thioester linkage to the sulfhydryl of the prosthetic group.

It localises to the cytoplasm. It functions in the pathway lipid metabolism; fatty acid biosynthesis. Its function is as follows. Carrier of the growing fatty acid chain in fatty acid biosynthesis. This chain is Acyl carrier protein, found in Vibrio cholerae serotype O1 (strain ATCC 39315 / El Tor Inaba N16961).